The following is a 140-amino-acid chain: MAKKVEKVVKLQIPAGKANPAPPVGPALGQAGVNIMGFCKEFNARTQEDAGLIIPVEISVYEDRSFTFITKTPPAPVLLKKAAGVEKGSGEPNKTKVATVTKDQVREIANQKMQDLNAADEEAAMRIIEGTARSMGITVQ.

This sequence belongs to the universal ribosomal protein uL11 family. As to quaternary structure, part of the ribosomal stalk of the 50S ribosomal subunit. Interacts with L10 and the large rRNA to form the base of the stalk. L10 forms an elongated spine to which L12 dimers bind in a sequential fashion forming a multimeric L10(L12)X complex. In terms of processing, one or more lysine residues are methylated.

Forms part of the ribosomal stalk which helps the ribosome interact with GTP-bound translation factors. This is Large ribosomal subunit protein uL11 from Staphylococcus saprophyticus subsp. saprophyticus (strain ATCC 15305 / DSM 20229 / NCIMB 8711 / NCTC 7292 / S-41).